The following is a 509-amino-acid chain: ATP synthase subunit alpha (509 aa).

ATP is bound at residue 169-176; sequence GDRQTGKT.

It belongs to the ATPase alpha/beta chains family. As to quaternary structure, F-type ATPases have 2 components, CF(1) - the catalytic core - and CF(0) - the membrane proton channel. CF(1) has five subunits: alpha(3), beta(3), gamma(1), delta(1), epsilon(1). CF(0) has three main subunits: a(1), b(2) and c(9-12). The alpha and beta chains form an alternating ring which encloses part of the gamma chain. CF(1) is attached to CF(0) by a central stalk formed by the gamma and epsilon chains, while a peripheral stalk is formed by the delta and b chains.

Its subcellular location is the cell inner membrane. The catalysed reaction is ATP + H2O + 4 H(+)(in) = ADP + phosphate + 5 H(+)(out). Produces ATP from ADP in the presence of a proton gradient across the membrane. The alpha chain is a regulatory subunit. The chain is ATP synthase subunit alpha from Rhizobium etli (strain CIAT 652).